A 307-amino-acid chain; its full sequence is Pantothenate kinase (307 aa).

An ATP-binding site is contributed by 87-94; the sequence is GSVAVGKS.

The protein belongs to the prokaryotic pantothenate kinase family.

It localises to the cytoplasm. It catalyses the reaction (R)-pantothenate + ATP = (R)-4'-phosphopantothenate + ADP + H(+). It functions in the pathway cofactor biosynthesis; coenzyme A biosynthesis; CoA from (R)-pantothenate: step 1/5. In Vibrio vulnificus (strain CMCP6), this protein is Pantothenate kinase.